Here is a 73-residue protein sequence, read N- to C-terminus: Large ribosomal subunit protein bL31 (73 aa).

Belongs to the bacterial ribosomal protein bL31 family. Type A subfamily. In terms of assembly, part of the 50S ribosomal subunit.

Its function is as follows. Binds the 23S rRNA. The sequence is that of Large ribosomal subunit protein bL31 (rpmE) from Ruegeria pomeroyi (strain ATCC 700808 / DSM 15171 / DSS-3) (Silicibacter pomeroyi).